Here is a 77-residue protein sequence, read N- to C-terminus: Blood-induced peptide 1 (77 aa).

A coiled-coil region spans residues 38–71 (EDFLHQENSELKKSLKNLEMENEKLKNILKTDYN).

Functionally, plays an important role in survival in host blood through increasing tolerance to stresses such as heat, salt, or cycloheximide, which is essential for virulence. The protein is Blood-induced peptide 1 of Candida albicans (strain SC5314 / ATCC MYA-2876) (Yeast).